The primary structure comprises 317 residues: Small ribosomal subunit protein RACK1 (317 aa).

WD repeat units follow at residues 13 to 44 (GHSG…IMWK), 61 to 91 (GHSH…RLWD), 103 to 133 (GHTK…KLWN), 146 to 178 (SHTE…KVWN), 190 to 220 (GHTG…MLWD), 231 to 260 (DGGD…KIWD), and 281 to 311 (AEPP…RVWQ).

This sequence belongs to the WD repeat G protein beta family. Ribosomal protein RACK1 subfamily.

The protein resides in the cytoplasm. In terms of biological role, involved in the recruitment, assembly and/or regulation of a variety of signaling molecules. Interacts with a wide variety of proteins and plays a role in many cellular processes. Required for VANGL2 membrane localization, inhibits Wnt signaling and regulates cellular polarization and oriented cell division during gastrulation. In Danio rerio (Zebrafish), this protein is Small ribosomal subunit protein RACK1 (gnb2l1).